The chain runs to 432 residues: Diaminopimelate decarboxylase (432 aa).

An N6-(pyridoxal phosphate)lysine modification is found at Lys-66. Pyridoxal 5'-phosphate is bound by residues Gly-248 and 290 to 293; that span reads EPGR. Substrate is bound by residues Arg-293, Arg-330, and Tyr-334. Cys-361 acts as the Proton donor in catalysis. 2 residues coordinate substrate: Glu-362 and Tyr-390. Tyr-390 contacts pyridoxal 5'-phosphate.

The protein belongs to the Orn/Lys/Arg decarboxylase class-II family. LysA subfamily. Homodimer. The cofactor is pyridoxal 5'-phosphate.

The enzyme catalyses meso-2,6-diaminopimelate + H(+) = L-lysine + CO2. The protein operates within amino-acid biosynthesis; L-lysine biosynthesis via DAP pathway; L-lysine from DL-2,6-diaminopimelate: step 1/1. Functionally, specifically catalyzes the decarboxylation of meso-diaminopimelate (meso-DAP) to L-lysine. The protein is Diaminopimelate decarboxylase of Bacillus methanolicus.